Reading from the N-terminus, the 270-residue chain is MASACASSTIAAVAFSSPSSQKNGSIVGATKASFLGGKRLRVSKFIAPVGSRSVAVSAVAADPDRPLWFPGSTPPEWLDGSLPGDFGFDPLGLGSDPESLKWNAQAELVHSRWAMLGAAGIFIPEFLTKIGVLNTPSWYTAGEQEYFTDTTTLFVIELVLIGWAEGRRWADIIKPGCVNTDPIFPNNKLTGTDVGYPGGLWFDPLGWGSGSPAKIKELRTKEIKNGRLAMLAVMGAWFQHIYTGTGPIDNLFAHLADPGHATIFAAFSPK.

The transit peptide at 1-41 (MASACASSTIAAVAFSSPSSQKNGSIVGATKASFLGGKRLR) directs the protein to the chloroplast. Position 68 (W68) interacts with chlorophyll b. Residues F88, E107, and H110 each contribute to the chlorophyll a site. R112 is a chlorophyll b binding site. Residues 113 to 133 (WAMLGAAGIFIPEFLTKIGVL) traverse the membrane as a helical segment. Q144 is a chlorophyll a binding site. The chain crosses the membrane as a helical span at residues 146–166 (YFTDTTTLFVIELVLIGWAEG). V155, E165, and R168 together coordinate chlorophyll b. Residues K221, E222, N225, R227, Q239, and H254 each coordinate chlorophyll a. The chain crosses the membrane as a helical span at residues 228–248 (LAMLAVMGAWFQHIYTGTGPI).

Belongs to the light-harvesting chlorophyll a/b-binding (LHC) protein family. In terms of assembly, the LHC complex consists of chlorophyll a-b binding proteins. It depends on Binds at least 14 chlorophylls (8 Chl-a and 6 Chl-b) and carotenoids such as lutein and neoxanthin. as a cofactor. In terms of processing, photoregulated by reversible phosphorylation of its threonine residues.

The protein resides in the plastid. It localises to the chloroplast thylakoid membrane. In terms of biological role, the light-harvesting complex (LHC) functions as a light receptor, it captures and delivers excitation energy to photosystems with which it is closely associated. This Petunia hybrida (Petunia) protein is Chlorophyll a-b binding protein, chloroplastic.